Here is a 121-residue protein sequence, read N- to C-terminus: Large ribosomal subunit protein uL22 (121 aa).

It belongs to the universal ribosomal protein uL22 family. As to quaternary structure, part of the 50S ribosomal subunit.

This protein binds specifically to 23S rRNA; its binding is stimulated by other ribosomal proteins, e.g. L4, L17, and L20. It is important during the early stages of 50S assembly. It makes multiple contacts with different domains of the 23S rRNA in the assembled 50S subunit and ribosome. Functionally, the globular domain of the protein is located near the polypeptide exit tunnel on the outside of the subunit, while an extended beta-hairpin is found that lines the wall of the exit tunnel in the center of the 70S ribosome. In Salinibacter ruber (strain DSM 13855 / M31), this protein is Large ribosomal subunit protein uL22.